Consider the following 542-residue polypeptide: Hydroxylamine reductase (542 aa).

Residues Cys3, Cys6, Cys15, and Cys21 each coordinate [4Fe-4S] cluster. Hybrid [4Fe-2O-2S] cluster-binding residues include His238, Glu262, Cys307, Cys398, Cys426, Cys451, Glu485, and Lys487. Residue Cys398 is modified to Cysteine persulfide.

Belongs to the HCP family. The cofactor is [4Fe-4S] cluster. It depends on hybrid [4Fe-2O-2S] cluster as a cofactor.

The protein localises to the cytoplasm. The enzyme catalyses A + NH4(+) + H2O = hydroxylamine + AH2 + H(+). In terms of biological role, catalyzes the reduction of hydroxylamine to form NH(3) and H(2)O. The protein is Hydroxylamine reductase of Microcystis aeruginosa (strain NIES-843 / IAM M-2473).